The chain runs to 324 residues: Probable cell division protein WhiA (324 aa).

The H-T-H motif DNA-binding region spans 276 to 310 (TLKELGEMMQGGKVSKSGINHRLRKIDEFADKLRN).

Belongs to the WhiA family.

Involved in cell division and chromosome segregation. The chain is Probable cell division protein WhiA from Shouchella clausii (strain KSM-K16) (Alkalihalobacillus clausii).